Reading from the N-terminus, the 206-residue chain is Urease accessory protein UreG (206 aa).

11–18 (GPVGAGKT) is a binding site for GTP.

Belongs to the SIMIBI class G3E GTPase family. UreG subfamily. In terms of assembly, homodimer. UreD, UreF and UreG form a complex that acts as a GTP-hydrolysis-dependent molecular chaperone, activating the urease apoprotein by helping to assemble the nickel containing metallocenter of UreC. The UreE protein probably delivers the nickel.

The protein resides in the cytoplasm. In terms of biological role, facilitates the functional incorporation of the urease nickel metallocenter. This process requires GTP hydrolysis, probably effectuated by UreG. In Ureaplasma parvum serovar 3 (strain ATCC 700970), this protein is Urease accessory protein UreG.